The chain runs to 273 residues: Bifunctional protein FolD (273 aa).

NADP(+)-binding positions include 149–151 (GLG) and V215.

This sequence belongs to the tetrahydrofolate dehydrogenase/cyclohydrolase family. In terms of assembly, homodimer.

It catalyses the reaction (6R)-5,10-methylene-5,6,7,8-tetrahydrofolate + NADP(+) = (6R)-5,10-methenyltetrahydrofolate + NADPH. It carries out the reaction (6R)-5,10-methenyltetrahydrofolate + H2O = (6R)-10-formyltetrahydrofolate + H(+). It participates in one-carbon metabolism; tetrahydrofolate interconversion. Catalyzes the oxidation of 5,10-methylenetetrahydrofolate to 5,10-methenyltetrahydrofolate and then the hydrolysis of 5,10-methenyltetrahydrofolate to 10-formyltetrahydrofolate. The protein is Bifunctional protein FolD of Mycoplasma genitalium (strain ATCC 33530 / DSM 19775 / NCTC 10195 / G37) (Mycoplasmoides genitalium).